The sequence spans 270 residues: Cytochrome c oxidase subunit 3 (270 aa).

Transmembrane regions (helical) follow at residues 21–41, 46–66, 90–110, 131–151, 167–187, 205–225, and 248–268; these read PWPF…VLYF, GSLV…FVWW, GIML…WAFF, FFSP…SGCA, AIFS…FQIY, FFMI…FLFV, and WYWH…YWWG.

It belongs to the cytochrome c oxidase subunit 3 family. Component of the cytochrome c oxidase (complex IV, CIV), a multisubunit enzyme composed of a catalytic core of 3 subunits and several supernumerary subunits. The complex exists as a monomer or a dimer and forms supercomplexes (SCs) in the inner mitochondrial membrane with ubiquinol-cytochrome c oxidoreductase (cytochrome b-c1 complex, complex III, CIII).

Its subcellular location is the mitochondrion inner membrane. The catalysed reaction is 4 Fe(II)-[cytochrome c] + O2 + 8 H(+)(in) = 4 Fe(III)-[cytochrome c] + 2 H2O + 4 H(+)(out). In terms of biological role, component of the cytochrome c oxidase, the last enzyme in the mitochondrial electron transport chain which drives oxidative phosphorylation. The respiratory chain contains 3 multisubunit complexes succinate dehydrogenase (complex II, CII), ubiquinol-cytochrome c oxidoreductase (cytochrome b-c1 complex, complex III, CIII) and cytochrome c oxidase (complex IV, CIV), that cooperate to transfer electrons derived from NADH and succinate to molecular oxygen, creating an electrochemical gradient over the inner membrane that drives transmembrane transport and the ATP synthase. Cytochrome c oxidase is the component of the respiratory chain that catalyzes the reduction of oxygen to water. Electrons originating from reduced cytochrome c in the intermembrane space (IMS) are transferred via the dinuclear copper A center (CU(A)) of subunit 2 and heme A of subunit 1 to the active site in subunit 1, a binuclear center (BNC) formed by heme A3 and copper B (CU(B)). The BNC reduces molecular oxygen to 2 water molecules using 4 electrons from cytochrome c in the IMS and 4 protons from the mitochondrial matrix. The sequence is that of Cytochrome c oxidase subunit 3 (COX3) from Cyanidium caldarium (Red alga).